A 431-amino-acid polypeptide reads, in one-letter code: Levansucrase LscB (431 aa).

Residues tryptophan 61, aspartate 62, alanine 148, arginine 218, and aspartate 219 each contribute to the sucrose site. Aspartate 62 serves as the catalytic Nucleophile. Glutamate 303 acts as the Proton donor/acceptor in catalysis.

This sequence belongs to the glycosyl hydrolase 68 family.

The protein resides in the secreted. The enzyme catalyses [6)-beta-D-fructofuranosyl-(2-&gt;](n) alpha-D-glucopyranoside + sucrose = [6)-beta-D-fructofuranosyl-(2-&gt;](n+1) alpha-D-glucopyranoside + D-glucose. Catalyzes the synthesis of levan, a fructose polymer, by transferring the fructosyl moiety from sucrose to a growing acceptor molecule. This is Levansucrase LscB from Pseudomonas savastanoi pv. glycinea (Pseudomonas syringae pv. glycinea).